We begin with the raw amino-acid sequence, 249 residues long: Small ribosomal subunit protein uS2 (249 aa).

This sequence belongs to the universal ribosomal protein uS2 family.

The chain is Small ribosomal subunit protein uS2 from Listeria innocua serovar 6a (strain ATCC BAA-680 / CLIP 11262).